Reading from the N-terminus, the 247-residue chain is tRNA (guanine-N(1)-)-methyltransferase (247 aa).

S-adenosyl-L-methionine-binding positions include G115 and 135 to 140 (IGDYVL).

This sequence belongs to the RNA methyltransferase TrmD family. Homodimer.

Its subcellular location is the cytoplasm. It carries out the reaction guanosine(37) in tRNA + S-adenosyl-L-methionine = N(1)-methylguanosine(37) in tRNA + S-adenosyl-L-homocysteine + H(+). In terms of biological role, specifically methylates guanosine-37 in various tRNAs. This Alkaliphilus metalliredigens (strain QYMF) protein is tRNA (guanine-N(1)-)-methyltransferase.